The sequence spans 353 residues: Putative glycosyltransferase TagX (353 aa).

The protein belongs to the glycosyltransferase 2 family.

This is Putative glycosyltransferase TagX (tagX) from Staphylococcus aureus (strain MSSA476).